The chain runs to 499 residues: Bifunctional purine biosynthesis protein PurH (499 aa).

One can recognise an MGS-like domain in the interval 1–144 (MINRALISVY…KNFKDVIVVT (144 aa)).

This sequence belongs to the PurH family.

The enzyme catalyses (6R)-10-formyltetrahydrofolate + 5-amino-1-(5-phospho-beta-D-ribosyl)imidazole-4-carboxamide = 5-formamido-1-(5-phospho-D-ribosyl)imidazole-4-carboxamide + (6S)-5,6,7,8-tetrahydrofolate. The catalysed reaction is IMP + H2O = 5-formamido-1-(5-phospho-D-ribosyl)imidazole-4-carboxamide. It functions in the pathway purine metabolism; IMP biosynthesis via de novo pathway; 5-formamido-1-(5-phospho-D-ribosyl)imidazole-4-carboxamide from 5-amino-1-(5-phospho-D-ribosyl)imidazole-4-carboxamide (10-formyl THF route): step 1/1. Its pathway is purine metabolism; IMP biosynthesis via de novo pathway; IMP from 5-formamido-1-(5-phospho-D-ribosyl)imidazole-4-carboxamide: step 1/1. The sequence is that of Bifunctional purine biosynthesis protein PurH from Clostridium kluyveri (strain NBRC 12016).